Here is a 119-residue protein sequence, read N- to C-terminus: Large ribosomal subunit protein P3 (119 aa).

The disordered stretch occupies residues 81-119 (GAAAGAASGGAAAEAPKAEEKKEEEKEESEDDLGFSLFD). The span at 84–95 (AGAASGGAAAEA) shows a compositional bias: low complexity.

This sequence belongs to the eukaryotic ribosomal protein P1/P2 family. Post-translationally, phosphorylated.

Functionally, plays an important role in the elongation step of protein synthesis. This is Large ribosomal subunit protein P3 from Oryza sativa subsp. japonica (Rice).